The primary structure comprises 622 residues: UvrABC system protein C (622 aa).

Residues 13 to 92 (DKPGVYLMKN…IKENRPKYNV (80 aa)) form the GIY-YIG domain. Residues 205 to 240 (DELIKKIEEKMKRAAEKMDFEGAAHYRDQRQALLDI) form the UVR domain.

The protein belongs to the UvrC family. As to quaternary structure, interacts with UvrB in an incision complex.

It localises to the cytoplasm. Its function is as follows. The UvrABC repair system catalyzes the recognition and processing of DNA lesions. UvrC both incises the 5' and 3' sides of the lesion. The N-terminal half is responsible for the 3' incision and the C-terminal half is responsible for the 5' incision. The sequence is that of UvrABC system protein C from Alkaliphilus metalliredigens (strain QYMF).